The sequence spans 151 residues: Large ribosomal subunit protein bL9 (151 aa).

This sequence belongs to the bacterial ribosomal protein bL9 family.

In terms of biological role, binds to the 23S rRNA. The sequence is that of Large ribosomal subunit protein bL9 from Rhodococcus opacus (strain B4).